Consider the following 394-residue polypeptide: GDNF family receptor alpha-like (394 aa).

The first 18 residues, methionine 1 to threonine 18, serve as a signal peptide directing secretion. At serine 19–glutamate 351 the chain is on the extracellular side. N-linked (GlcNAc...) asparagine glycosylation is found at asparagine 23, asparagine 50, asparagine 62, asparagine 67, asparagine 103, and asparagine 116. Cystine bridges form between cysteine 131/cysteine 189, cysteine 138/cysteine 144, cysteine 155/cysteine 167, cysteine 162/cysteine 210, cysteine 191/cysteine 198, cysteine 220/cysteine 291, cysteine 227/cysteine 233, cysteine 244/cysteine 275, cysteine 252/cysteine 258, cysteine 269/cysteine 316, and cysteine 293/cysteine 304. The interval alanine 149–glutamine 228 is required for interaction with GDF15. A helical transmembrane segment spans residues valine 352–valine 371. Residues lysine 372–leucine 394 are Cytoplasmic-facing.

Belongs to the GDNFR family. Interacts (via the extracellular domain) with GDF15 and RET; receptor of GDF15, mediates cellular signaling through interaction with RET after GDF15-binding. Interaction with RET requires previous GDF15-binding. Cleaved and inactivated by MMP14, inhibiting the GDF15-GFRAL aversive response. In terms of tissue distribution, expressed in the brainstem, restricted to cells in the area postrema and the immediately adjacent region of the nucleus tractus solitarius (at protein level). Detected at low levels in testis and adipose tissue.

Its subcellular location is the cell membrane. With respect to regulation, specifically inhibited by 3P10 monoclonal antibody. Strongly activated by LY3463251, a long-acting and stable agonist composed of GDF15 conjugated monomeric human IgG4 Fc. In terms of biological role, brainstem-restricted receptor for GDF15 hormone, which triggers an aversive response, characterized by nausea, vomiting, and/or loss of appetite in response to various stresses. The aversive response is both required to reduce continuing exposure to those stresses at the time of exposure and to promote avoidance behavior in the future. The GDF15-GFRAL aversive response is triggered by stresses, such as anticancer drugs (camptothecin or cisplatin), cancers or drugs such as metformin. Upon interaction with its ligand, GDF15, mediates the GDF15-induced autophosphorylation and activation of the RET tyrosine kinase receptor, leading to activation of MAPK- and AKT- signaling pathways. Ligand-binding activates GFRAL-expressing neurons localized in the area postrema and nucleus tractus solitarius of the brainstem. The GDF15-GFRAL signal induces expression of genes involved in metabolism, such as lipid metabolism in adipose tissues. This Homo sapiens (Human) protein is GDNF family receptor alpha-like.